A 114-amino-acid chain; its full sequence is Vesicle-associated membrane protein 2 (114 aa).

Pro residues predominate over residues 1-11; sequence MSAPAAGPPAA. The segment at 1–31 is disordered; sequence MSAPAAGPPAAAPGDGAPQGPPNLTSNRRLQ. N-acetylserine is present on Ser-2. Over 2-92 the chain is Cytoplasmic; the sequence is SAPAAGPPAA…KRKYWWKNMK (91 aa). The 61-residue stretch at 29 to 89 folds into the v-SNARE coiled-coil homology domain; sequence RLQQTQAQVD…AKLKRKYWWK (61 aa). Residues 93 to 111 traverse the membrane as a helical; Anchor for type IV membrane protein segment; sequence MMIIMGVICAIILIIIIVY. The Vesicular segment spans residues 112–114; the sequence is FST.

Belongs to the synaptobrevin family.

The protein resides in the cytoplasmic vesicle. It is found in the secretory vesicle. The protein localises to the synaptic vesicle membrane. Its subcellular location is the cell membrane. In terms of biological role, involved in the targeting and/or fusion of transport vesicles to their target membrane. Major SNARE protein of synaptic vesicles which mediates fusion of synaptic vesicles to release neurotransmitters. Essential for fast vesicular exocytosis and activity-dependent neurotransmitter release as well as fast endocytosis that mediates rapid reuse of synaptic vesicles. This Xenopus laevis (African clawed frog) protein is Vesicle-associated membrane protein 2 (vamp2).